The following is a 520-amino-acid chain: 2-isopropylmalate synthase (520 aa).

Positions V5–Y267 constitute a Pyruvate carboxyltransferase domain. Mn(2+) is bound by residues D14, H202, H204, and N238. A regulatory domain region spans residues R392–V520.

The protein belongs to the alpha-IPM synthase/homocitrate synthase family. LeuA type 1 subfamily. In terms of assembly, homodimer. It depends on Mn(2+) as a cofactor.

The protein localises to the cytoplasm. It catalyses the reaction 3-methyl-2-oxobutanoate + acetyl-CoA + H2O = (2S)-2-isopropylmalate + CoA + H(+). It participates in amino-acid biosynthesis; L-leucine biosynthesis; L-leucine from 3-methyl-2-oxobutanoate: step 1/4. Functionally, catalyzes the condensation of the acetyl group of acetyl-CoA with 3-methyl-2-oxobutanoate (2-ketoisovalerate) to form 3-carboxy-3-hydroxy-4-methylpentanoate (2-isopropylmalate). This is 2-isopropylmalate synthase from Yersinia enterocolitica serotype O:8 / biotype 1B (strain NCTC 13174 / 8081).